Consider the following 200-residue polypeptide: Peptidyl-tRNA hydrolase (200 aa).

Tyr14 contributes to the tRNA binding site. His19 (proton acceptor) is an active-site residue. Positions 64, 66, and 112 each coordinate tRNA.

This sequence belongs to the PTH family. As to quaternary structure, monomer.

It localises to the cytoplasm. It carries out the reaction an N-acyl-L-alpha-aminoacyl-tRNA + H2O = an N-acyl-L-amino acid + a tRNA + H(+). Its function is as follows. Hydrolyzes ribosome-free peptidyl-tRNAs (with 1 or more amino acids incorporated), which drop off the ribosome during protein synthesis, or as a result of ribosome stalling. Catalyzes the release of premature peptidyl moieties from peptidyl-tRNA molecules trapped in stalled 50S ribosomal subunits, and thus maintains levels of free tRNAs and 50S ribosomes. In Maricaulis maris (strain MCS10) (Caulobacter maris), this protein is Peptidyl-tRNA hydrolase.